The primary structure comprises 427 residues: Adenylosuccinate synthetase (427 aa).

GTP is bound by residues 12 to 18 and 40 to 42; these read GDEGKGK and GHT. Asp13 serves as the catalytic Proton acceptor. Asp13 and Gly40 together coordinate Mg(2+). Residues 13 to 16, 38 to 41, Thr128, Arg142, Gln223, Thr238, and Arg302 each bind IMP; these read DEGK and NAGH. His41 functions as the Proton donor in the catalytic mechanism. Residue 298-304 participates in substrate binding; that stretch reads VTTGRDR. GTP-binding positions include Arg304, 330 to 332, and 412 to 414; these read KLD and GVG.

The protein belongs to the adenylosuccinate synthetase family. As to quaternary structure, homodimer. The cofactor is Mg(2+).

The protein localises to the cytoplasm. It carries out the reaction IMP + L-aspartate + GTP = N(6)-(1,2-dicarboxyethyl)-AMP + GDP + phosphate + 2 H(+). Its pathway is purine metabolism; AMP biosynthesis via de novo pathway; AMP from IMP: step 1/2. Plays an important role in the de novo pathway of purine nucleotide biosynthesis. Catalyzes the first committed step in the biosynthesis of AMP from IMP. The chain is Adenylosuccinate synthetase from Streptomyces griseus subsp. griseus (strain JCM 4626 / CBS 651.72 / NBRC 13350 / KCC S-0626 / ISP 5235).